The following is a 118-amino-acid chain: Large ribosomal subunit protein uL22 (118 aa).

It belongs to the universal ribosomal protein uL22 family. In terms of assembly, part of the 50S ribosomal subunit.

Its function is as follows. This protein binds specifically to 23S rRNA; its binding is stimulated by other ribosomal proteins, e.g. L4, L17, and L20. It is important during the early stages of 50S assembly. It makes multiple contacts with different domains of the 23S rRNA in the assembled 50S subunit and ribosome. Functionally, the globular domain of the protein is located near the polypeptide exit tunnel on the outside of the subunit, while an extended beta-hairpin is found that lines the wall of the exit tunnel in the center of the 70S ribosome. The polypeptide is Large ribosomal subunit protein uL22 (Nostoc punctiforme (strain ATCC 29133 / PCC 73102)).